The chain runs to 198 residues: Large ribosomal subunit protein bL25 (198 aa).

The protein belongs to the bacterial ribosomal protein bL25 family. CTC subfamily. Part of the 50S ribosomal subunit; part of the 5S rRNA/L5/L18/L25 subcomplex. Contacts the 5S rRNA. Binds to the 5S rRNA independently of L5 and L18.

In terms of biological role, this is one of the proteins that binds to the 5S RNA in the ribosome where it forms part of the central protuberance. This chain is Large ribosomal subunit protein bL25, found in Lysinibacillus sphaericus (strain C3-41).